Consider the following 745-residue polypeptide: Putative cryptochrome DASH, mitochondrial (745 aa).

The N-terminal 22 residues, 1 to 22 (MAPSKVVIYAMRRELRLSDNPI), are a transit peptide targeting the mitochondrion. One can recognise a Photolyase/cryptochrome alpha/beta domain in the interval 23–166 (FHHLSNPESK…DFKLWDDEKY (144 aa)). Disordered regions lie at residues 563–688 (KFNL…GGGG) and 702–745 (GGYR…QTDA). Residues 571-584 (SKVKKRPFFRKRGT) show a composition bias toward basic residues. Low complexity predominate over residues 591–603 (GSAESPGSSDSHS). A compositionally biased stretch (gly residues) spans 604 to 616 (GSGGSPDGSGGGN). Residues 632 to 648 (QQTHQGSGRSQSSSNHG) are compositionally biased toward low complexity. Gly residues-rich tracts occupy residues 672 to 688 (RGGG…GGGG) and 702 to 718 (GGYR…GGFR). Positions 735–745 (QQVASQFQTDA) are enriched in polar residues.

This sequence belongs to the DNA photolyase class-1 family. FAD serves as cofactor. Requires (6R)-5,10-methylene-5,6,7,8-tetrahydrofolate as cofactor.

It is found in the mitochondrion. In terms of biological role, may have a photoreceptor function. The polypeptide is Putative cryptochrome DASH, mitochondrial (cry) (Neurospora crassa (strain ATCC 24698 / 74-OR23-1A / CBS 708.71 / DSM 1257 / FGSC 987)).